We begin with the raw amino-acid sequence, 293 residues long: Light-independent protochlorophyllide reductase iron-sulfur ATP-binding protein (293 aa).

ATP contacts are provided by residues 10–15 and Lys-39; that span reads GIGKST. Residue Ser-14 participates in Mg(2+) binding. Residues Cys-95 and Cys-129 each coordinate [4Fe-4S] cluster. ATP is bound at residue 180–181; sequence NR.

Belongs to the NifH/BchL/ChlL family. In terms of assembly, homodimer. Protochlorophyllide reductase is composed of three subunits; ChlL, ChlN and ChlB. It depends on [4Fe-4S] cluster as a cofactor.

The protein resides in the plastid. It is found in the chloroplast. It catalyses the reaction chlorophyllide a + oxidized 2[4Fe-4S]-[ferredoxin] + 2 ADP + 2 phosphate = protochlorophyllide a + reduced 2[4Fe-4S]-[ferredoxin] + 2 ATP + 2 H2O. Its pathway is porphyrin-containing compound metabolism; chlorophyll biosynthesis (light-independent). Component of the dark-operative protochlorophyllide reductase (DPOR) that uses Mg-ATP and reduced ferredoxin to reduce ring D of protochlorophyllide (Pchlide) to form chlorophyllide a (Chlide). This reaction is light-independent. The L component serves as a unique electron donor to the NB-component of the complex, and binds Mg-ATP. In Adiantum capillus-veneris (Maidenhair fern), this protein is Light-independent protochlorophyllide reductase iron-sulfur ATP-binding protein.